The primary structure comprises 385 residues: 4-hydroxy-3-methylbut-2-en-1-yl diphosphate synthase (flavodoxin) (385 aa).

Residues Cys282, Cys285, Cys317, and Glu324 each coordinate [4Fe-4S] cluster.

It belongs to the IspG family. Requires [4Fe-4S] cluster as cofactor.

The enzyme catalyses (2E)-4-hydroxy-3-methylbut-2-enyl diphosphate + oxidized [flavodoxin] + H2O + 2 H(+) = 2-C-methyl-D-erythritol 2,4-cyclic diphosphate + reduced [flavodoxin]. It participates in isoprenoid biosynthesis; isopentenyl diphosphate biosynthesis via DXP pathway; isopentenyl diphosphate from 1-deoxy-D-xylulose 5-phosphate: step 5/6. Functionally, converts 2C-methyl-D-erythritol 2,4-cyclodiphosphate (ME-2,4cPP) into 1-hydroxy-2-methyl-2-(E)-butenyl 4-diphosphate. In Nocardia farcinica (strain IFM 10152), this protein is 4-hydroxy-3-methylbut-2-en-1-yl diphosphate synthase (flavodoxin).